The primary structure comprises 327 residues: Inactive peptidyl-prolyl cis-trans isomerase FKBP6 (327 aa).

Positions 54–143 (DASVLVKYSG…LFEIELIDFL (90 aa)) constitute a PPIase FKBP-type domain. TPR repeat units lie at residues 171 to 204 (AATE…LHRR), 219 to 252 (LLVL…DKRN), and 253 to 286 (AKAL…QPCN).

The protein belongs to the FKBP6 family. In terms of assembly, interacts with HSP72/HSPA2 and CLTC. Interacts with GAPDH; leading to inhibit GAPDH catalytic activity. Interacts (via TPR repeats) with HSP90. As to expression, testis-specific.

The protein resides in the cytoplasm. It localises to the cytosol. It is found in the nucleus. Its subcellular location is the chromosome. Functionally, co-chaperone required during spermatogenesis to repress transposable elements and prevent their mobilization, which is essential for the germline integrity. Acts via the piRNA metabolic process, which mediates the repression of transposable elements during meiosis by forming complexes composed of piRNAs and Piwi proteins and govern the methylation and subsequent repression of transposons. Acts as a co-chaperone via its interaction with HSP90 and is required for the piRNA amplification process, the secondary piRNA biogenesis. May be required together with HSP90 in removal of 16 nucleotide ping-pong by-products from Piwi complexes, possibly facilitating turnover of Piwi complexes. The polypeptide is Inactive peptidyl-prolyl cis-trans isomerase FKBP6 (Fkbp6) (Mus musculus (Mouse)).